A 400-amino-acid polypeptide reads, in one-letter code: GTPase-binding protein rid1 (400 aa).

Over residues 16 to 27 the composition is skewed to polar residues; it reads LSSDGLSESVNS. A disordered region spans residues 16-47; the sequence is LSSDGLSESVNSSDREDSLSFQTPSTPSEDEM. Residues 39–400 enclose the GBD/FH3 domain; the sequence is PSTPSEDEMP…PYKLVQTGST (362 aa).

Its subcellular location is the cytoplasm. This chain is GTPase-binding protein rid1 (rid1), found in Schizosaccharomyces pombe (strain 972 / ATCC 24843) (Fission yeast).